The following is a 420-amino-acid chain: Glucose-1-phosphate adenylyltransferase (420 aa).

Residues Y107, G172, E187 to K188, and S205 contribute to the alpha-D-glucose 1-phosphate site.

Belongs to the bacterial/plant glucose-1-phosphate adenylyltransferase family. As to quaternary structure, homotetramer.

The catalysed reaction is alpha-D-glucose 1-phosphate + ATP + H(+) = ADP-alpha-D-glucose + diphosphate. It functions in the pathway glycan biosynthesis; glycogen biosynthesis. Functionally, involved in the biosynthesis of ADP-glucose, a building block required for the elongation reactions to produce glycogen. Catalyzes the reaction between ATP and alpha-D-glucose 1-phosphate (G1P) to produce pyrophosphate and ADP-Glc. The protein is Glucose-1-phosphate adenylyltransferase of Rhodopseudomonas palustris (strain HaA2).